The sequence spans 173 residues: uncharacterized protein (173 aa).

Transmembrane regions (helical) follow at residues 13-35 (LQVILKFFFALLCFCIILFPLLS), 50-72 (IIFIYYFMSLYSLNIFSIFFLGL), 107-129 (NYLINFVVFCFYCLFILNFKYLL), and 139-161 (GYLIIFFQSLTTIFSYNIIRLIL).

It is found in the cell membrane. This is an uncharacterized protein from Rickettsia prowazekii (strain Madrid E).